The chain runs to 134 residues: DNA-directed RNA polymerase subunit omega (134 aa).

Positions 76-102 (EVDEPEPDPASMIAAGGAAAADSEEQD) are disordered.

The protein belongs to the RNA polymerase subunit omega family. As to quaternary structure, the RNAP catalytic core consists of 2 alpha, 1 beta, 1 beta' and 1 omega subunit. When a sigma factor is associated with the core the holoenzyme is formed, which can initiate transcription.

The catalysed reaction is RNA(n) + a ribonucleoside 5'-triphosphate = RNA(n+1) + diphosphate. Functionally, promotes RNA polymerase assembly. Latches the N- and C-terminal regions of the beta' subunit thereby facilitating its interaction with the beta and alpha subunits. The chain is DNA-directed RNA polymerase subunit omega from Rhizobium etli (strain ATCC 51251 / DSM 11541 / JCM 21823 / NBRC 15573 / CFN 42).